A 1143-amino-acid chain; its full sequence is Major DNA-binding protein (1143 aa).

Residues 1140–1143 (RMRL) are required for nuclear localization.

This sequence belongs to the herpesviridae major DNA-binding protein family. Homooligomers. Forms double-helical filaments necessary for the formation of replication compartments within the host nucleus. Interacts with the origin-binding protein. Interacts with the helicase primase complex; this interaction stimulates primer synthesis activity of the helicase-primase complex. Interacts with the DNA polymerase. Interacts with the alkaline exonuclease; this interaction increases its nuclease processivity.

The protein resides in the host nucleus. Functionally, plays several crucial roles in viral infection. Participates in the opening of the viral DNA origin to initiate replication by interacting with the origin-binding protein. May disrupt loops, hairpins and other secondary structures present on ssDNA to reduce and eliminate pausing of viral DNA polymerase at specific sites during elongation. Promotes viral DNA recombination by performing strand-transfer, characterized by the ability to transfer a DNA strand from a linear duplex to a complementary single-stranded DNA circle. Can also catalyze the renaturation of complementary single strands. Additionally, reorganizes the host cell nucleus, leading to the formation of prereplicative sites and replication compartments. This process is driven by the protein which can form double-helical filaments in the absence of DNA. This is Major DNA-binding protein from Elephantid herpesvirus 1 (isolate Asian elephant/Berlin/Kiba/1998) (EIHV-1).